The primary structure comprises 333 residues: DNA-directed RNA polymerase subunit alpha (333 aa).

Residues 1 to 234 (MQISVNEFLT…QQLAAFVDLK (234 aa)) form an alpha N-terminal domain (alpha-NTD) region. Residues 248-333 (IDPILLRPVD…SLKKDDKATA (86 aa)) are alpha C-terminal domain (alpha-CTD).

It belongs to the RNA polymerase alpha chain family. In terms of assembly, homodimer. The RNAP catalytic core consists of 2 alpha, 1 beta, 1 beta' and 1 omega subunit. When a sigma factor is associated with the core the holoenzyme is formed, which can initiate transcription.

It catalyses the reaction RNA(n) + a ribonucleoside 5'-triphosphate = RNA(n+1) + diphosphate. Its function is as follows. DNA-dependent RNA polymerase catalyzes the transcription of DNA into RNA using the four ribonucleoside triphosphates as substrates. The chain is DNA-directed RNA polymerase subunit alpha from Pseudomonas entomophila (strain L48).